A 98-amino-acid chain; its full sequence is Protein E7 (98 aa).

The tract at residues methionine 1–glycine 40 is E7 terminal domain. The LXCXE motif; interaction with host RB1 and TMEM173/STING motif lies at leucine 22–glutamate 26. Residues cysteine 58 to cysteine 94 fold into a zinc finger. The Nuclear export signal motif lies at isoleucine 76–methionine 84.

The protein belongs to the papillomaviridae E7 protein family. In terms of assembly, homodimer. Homooligomer. Interacts with host RB1; this interaction induces dissociation of RB1-E2F1 complex thereby disrupting RB1 activity. Interacts with host EP300; this interaction represses EP300 transcriptional activity. Forms a complex with CHD4 and HDAC1, thereby altering the action of host histone deacetylation. A similar complex involving E7, CHD4 and HDAC2 may also form. Interacts with protein E2; this interaction inhibits E7 oncogenic activity. In terms of processing, highly phosphorylated.

The protein localises to the host cytoplasm. It is found in the host nucleus. In terms of biological role, plays a role in viral genome replication by driving entry of quiescent cells into the cell cycle. Stimulation of progression from G1 to S phase allows the virus to efficiently use the cellular DNA replicating machinery to achieve viral genome replication. E7 protein has both transforming and trans-activating activities. Induces the disassembly of the E2F1 transcription factor from RB1, with subsequent transcriptional activation of E2F1-regulated S-phase genes. Interferes with host histone deacetylation mediated by HDAC1 and HDAC2, leading to transcription activation. Also plays a role in the inhibition of both antiviral and antiproliferative functions of host interferon alpha. Interaction with host TMEM173/STING impairs the ability of TMEM173/STING to sense cytosolic DNA and promote the production of type I interferon (IFN-alpha and IFN-beta). The chain is Protein E7 from Human papillomavirus type 16.